We begin with the raw amino-acid sequence, 81 residues long: Neuronatin (81 aa).

Belongs to the neuronatin family.

Functionally, may participate in the maintenance of segment identity in the hindbrain and pituitary development, and maturation or maintenance of the overall structure of the nervous system. May function as a regulatory subunit of ion channels. The protein is Neuronatin (NNAT) of Homo sapiens (Human).